The chain runs to 421 residues: Tol-Pal system protein TolA (421 aa).

The Cytoplasmic portion of the chain corresponds to 1–13; it reads MSKATEQNDKLKR. The chain crosses the membrane as a helical span at residues 14-34; that stretch reads AIIISAVLHVILFAALIWSSF. The Periplasmic segment spans residues 35–421; it reads DENIEASAGG…FKNAPLDFKP (387 aa). Positions 48–310 are domain II (alpha-helical); it reads SSIDAVMVDS…LSSGKNAPKT (263 aa). Residues 65–266 are disordered; the sequence is KRMQSQESSA…KAAADKKAAA (202 aa). Basic and acidic residues-rich tracts occupy residues 73–175 and 206–266; these read SAKR…EAEA and EARK…KAAA. 13 tandem repeats follow at residues 224–229, 230–234, 235–240, 241–245, 246–250, 251–255, 256–260, 261–266, 267–271, 272–277, 278–282, 283–287, and 288–292. The interval 224 to 292 is 13 X tandem repeats of [EDA]-K(1,2)-A(2,4); sequence EKKAAAEKAA…EKAAAAKAAA (69 aa). Residues 300-336 form a disordered region; it reads ELSSGKNAPKTGGGAKGNNASPAGSGNTKNNGASGAD. The domain III (functional) stretch occupies residues 311–421; sequence GGGAKGNNAS…FKNAPLDFKP (111 aa). Over residues 317-332 the composition is skewed to polar residues; the sequence is NNASPAGSGNTKNNGA. Cysteines 363 and 388 form a disulfide.

It belongs to the TolA family. The Tol-Pal system is composed of five core proteins: the inner membrane proteins TolA, TolQ and TolR, the periplasmic protein TolB and the outer membrane protein Pal. They form a network linking the inner and outer membranes and the peptidoglycan layer. TolA interacts with TolQ and TolR via its N-terminal domain. Interacts with CpoB, and with the trimeric porins OmpC, OmpF, PhoE and LamB via its central domain. Interacts with TolB via its C-terminal domain. Also interacts with Pal via its C-terminal domain. This interaction is proton motive force dependent and requires TolQ and TolR.

The protein localises to the cell inner membrane. Functionally, part of the Tol-Pal system, which plays a role in outer membrane invagination during cell division and is important for maintaining outer membrane integrity. The Tol-Pal system is also required for polar localization of chemoreceptors clusters. The system also appears to be required for the activity of several outer membrane-localized enzymes with cell wall remodeling activity. Is involved in the uptake of group A colicins (colicins A, E1, E2, E3, and K) and in the uptake of filamentous phage DNA. This Escherichia coli (strain K12) protein is Tol-Pal system protein TolA.